The following is a 545-amino-acid chain: 2-succinyl-5-enolpyruvyl-6-hydroxy-3-cyclohexene-1-carboxylate synthase (545 aa).

Residues 170 to 185 (QVSGLQRSAPAPSSDS) are compositionally biased toward polar residues. The disordered stretch occupies residues 170 to 193 (QVSGLQRSAPAPSSDSPLGAAPQL).

It belongs to the TPP enzyme family. MenD subfamily. As to quaternary structure, homodimer. Mg(2+) serves as cofactor. Requires Mn(2+) as cofactor. It depends on thiamine diphosphate as a cofactor.

The enzyme catalyses isochorismate + 2-oxoglutarate + H(+) = 5-enolpyruvoyl-6-hydroxy-2-succinyl-cyclohex-3-ene-1-carboxylate + CO2. The protein operates within quinol/quinone metabolism; 1,4-dihydroxy-2-naphthoate biosynthesis; 1,4-dihydroxy-2-naphthoate from chorismate: step 2/7. Its pathway is cofactor biosynthesis; phylloquinone biosynthesis. Functionally, catalyzes the thiamine diphosphate-dependent decarboxylation of 2-oxoglutarate and the subsequent addition of the resulting succinic semialdehyde-thiamine pyrophosphate anion to isochorismate to yield 2-succinyl-5-enolpyruvyl-6-hydroxy-3-cyclohexene-1-carboxylate (SEPHCHC). This is 2-succinyl-5-enolpyruvyl-6-hydroxy-3-cyclohexene-1-carboxylate synthase from Parasynechococcus marenigrum (strain WH8102).